Reading from the N-terminus, the 253-residue chain is CD151 antigen (253 aa).

Topologically, residues 1-18 (MGEFNEKKATCGTVCLKY) are cytoplasmic. Residues Cys11 and Cys15 are each lipidated (S-palmitoyl cysteine). Residues 19–39 (LLFTYNCCFWLAGLAVMAVGI) form a helical membrane-spanning segment. The Extracellular segment spans residues 40–57 (WTLALKSDYISLLASSTY). Residues 58 to 78 (LATAYILVVAGVVVMVTGVLG) form a helical membrane-spanning segment. Topologically, residues 79–91 (CCATFKERRNLLR) are cytoplasmic. Residues 92–112 (LYFILLLIIFLLEIIAGILAY) traverse the membrane as a helical segment. At 113–221 (VYYQQLNTEL…LETFIQEHLR (109 aa)) the chain is on the extracellular side. N-linked (GlcNAc...) asparagine glycosylation is present at Asn159. The chain crosses the membrane as a helical span at residues 222-242 (VIGAVGIGIACVQVFGMIFTC). Residues Cys242 and Cys243 are each lipidated (S-palmitoyl cysteine). At 243-253 (CLYRSLKLEHY) the chain is on the cytoplasmic side.

The protein belongs to the tetraspanin (TM4SF) family. As to quaternary structure, interacts with integrins ITGA3:ITGB1, ITGA5:ITGB1, ITGA3:ITGB1 and ITGA6:ITGB4 and with CD9 and CD181. Interacts (via the second extracellular domain) with integrin ITGAV:ITGB3. Interacts with ITGA3; this interaction modulates ITGA3 glycosylation pattern. Interacts with F11R. Interacts with RAC1 and CDC42; these interactions mediate physical association of RAC1 and CDC42 with integrin adhesion receptor complexes. Post-translationally, palmitoylated. Palmitoylation by ZDHHC2 regulates CD151 expression, association with other tetraspanin family proteins and function in cell adhesion. Ubiquitinated by RNF128 on lysine residues present in the tetraspanin amino terminus via 'Lys-48'-linked ubiquitin leading to proteasomal degradation.

The protein localises to the cell membrane. Its function is as follows. Structural component of specialized membrane microdomains known as tetraspanin-enriched microdomains (TERMs), which act as platforms for receptor clustering and signaling. Plays a role in various cellular and molecular mechanism through its association with both integrin and non-integrin proteins. These interactions facilitate critical cellular functions, including cell-to-cell communication, wound healing, platelet aggregation, trafficking, cell motility, and angiogenesis. Via interaction with JAM-A/F11R and integrin ITGA3:ITGB1, promotes the recruitment of signaling molecules such as RAC1, CDC42 and RhoGTPases to facilitate the polarization of epithelial cells and the reorganization of the actin cytoskeleton, which are critical steps in cell migration process. Regulates the glycosylation pattern of ITGA3:ITGB1 thereby modulating its activity. Plays an essential role in the maintenance of central laminin-binding integrin ITGA6:ITGB4-containing adhesion complexes. Essential for the proper assembly of the glomerular and tubular basement membranes in kidney. Contributes to T-cell activation by modulating integrin signaling leading to activation of downstream targets PTK2 and MAPK1/MAPK3. In Mus musculus (Mouse), this protein is CD151 antigen (Cd151).